Here is a 249-residue protein sequence, read N- to C-terminus: ATP synthase subunit a (249 aa).

Transmembrane regions (helical) follow at residues serine 30–glycine 50, phenylalanine 84–isoleucine 104, leucine 114–tyrosine 134, isoleucine 143–phenylalanine 163, leucine 196–isoleucine 216, and leucine 221–leucine 241.

It belongs to the ATPase A chain family. As to quaternary structure, F-type ATPases have 2 components, CF(1) - the catalytic core - and CF(0) - the membrane proton channel. CF(1) has five subunits: alpha(3), beta(3), gamma(1), delta(1), epsilon(1). CF(0) has four main subunits: a, b, b' and c.

The protein localises to the cell inner membrane. Functionally, key component of the proton channel; it plays a direct role in the translocation of protons across the membrane. This is ATP synthase subunit a from Rhodopseudomonas palustris (strain BisB18).